We begin with the raw amino-acid sequence, 481 residues long: Endoplasmic reticulum lectin 1 (481 aa).

Positions 1–27 (MRRSDRLRCAGASLLVVLCGVFRSSFG) are cleaved as a signal peptide. MRH domains are found at residues 108–245 (SSCS…LCNH) and 340–467 (SYCF…ICKI). 6 disulfide bridges follow: cysteine 110–cysteine 123, cysteine 198–cysteine 231, cysteine 214–cysteine 243, cysteine 342–cysteine 355, cysteine 419–cysteine 453, and cysteine 434–cysteine 465.

It localises to the endoplasmic reticulum lumen. Its function is as follows. Probable lectin that binds selectively to improperly folded lumenal proteins. May function in endoplasmic reticulum quality control and endoplasmic reticulum-associated degradation (ERAD) of both non-glycosylated proteins and glycoproteins. The polypeptide is Endoplasmic reticulum lectin 1 (erlec1) (Xenopus tropicalis (Western clawed frog)).